The chain runs to 362 residues: Major capsid protein VP1 (362 aa).

Residues 5-19 (KRKGECPGAAPKKPK) carry the Bipartite nuclear localization signal motif. At Thr-338 the chain carries Phosphothreonine; by host.

The protein belongs to the polyomaviruses coat protein VP1 family. Homomultimer; disulfide-linked. The virus capsid is composed of 72 icosahedral units, each one composed of five disulfide-linked copies of VP1. Interacts with minor capsid proteins VP2 and VP3.

It is found in the virion. The protein localises to the host nucleus. Functionally, forms an icosahedral capsid with a T=7 symmetry and a 40 nm diameter. The capsid is composed of 72 pentamers linked to each other by disulfide bonds and associated with VP2 or VP3 proteins. Interacts with sialic acids on the cell surface to provide virion attachment to target cell. Once attached, the virion is internalized by endocytosis and traffics to the endoplasmic reticulum. Inside the endoplasmic reticulum, the protein folding machinery isomerizes VP1 interpentamer disulfide bonds, thereby triggering initial uncoating. Next, the virion uses the endoplasmic reticulum-associated degradation machinery to probably translocate in the cytosol before reaching the nucleus. Nuclear entry of the viral DNA involves the selective exposure and importin recognition of VP2/Vp3 nuclear localization signal. In late phase of infection, neo-synthesized VP1 encapsulates replicated genomic DNA in the nucleus, and participates in rearranging nucleosomes around the viral DNA. The chain is Major capsid protein VP1 from Simian virus 12 (strain wt100) (SV-12).